A 322-amino-acid chain; its full sequence is Probable transcription factor KAN3 (322 aa).

The tract at residues 1–35 is disordered; that stretch reads MELFPSQPDLYLKISRRREEEQEKESQELQEQEVE. Residues 17–35 are compositionally biased toward basic and acidic residues; that stretch reads RREEEQEKESQELQEQEVE. Residues 161–221 enclose the HTH myb-type domain; the sequence is GVRAPRMRWT…HLQMYRTIKS (61 aa). A DNA-binding region (H-T-H motif) is located at residues 192 to 217; sequence PKSVLELMDVQDLTLAHVKSHLQMYR. 2 disordered regions span residues 222–244 and 267–322; these read TEKPTTSSGQSDCENGSQVNSER and KASS…NLSP. Polar residues-rich tracts occupy residues 224–241 and 299–322; these read KPTTSSGQSDCENGSQVN and LTGTRPETETPNLDFTLATPNLSP.

Expressed in developing phloem.

It localises to the nucleus. Functionally, probable transcription factor that regulates lateral organ polarity. Plays a role in lateral root formation and development. This chain is Probable transcription factor KAN3 (KAN3), found in Arabidopsis thaliana (Mouse-ear cress).